A 218-amino-acid chain; its full sequence is MKSESKIDWTVPRPNKNPKTKQPYKRGRNWGIVVYPESLPENWKDIIRQEPIAVSPLHDKDVNPDGEKKKSHYHLVLNYKGNKSFEQIDEIARSLRAPAPQRISSLTGAVRYLTHMDNPEKYQYDNADIETFGGFDLESCLALSTGDKRQALRDMLAFISENEIMHLKDFADYCMSEEAPAGWFELLTERNTLFIKEYIKSNWQKQQYASKNINKMSD.

The segment at 1–26 (MKSESKIDWTVPRPNKNPKTKQPYKR) is disordered. Positions 16–26 (KNPKTKQPYKR) are enriched in basic residues.

It belongs to the Gram-positive plasmids replication protein type 2 family.

Functionally, is essential for plasmid replication. Nicks the positive strand at the plus origin of replication. The protein is Replication protein RepB (repB) of Lactiplantibacillus plantarum (Lactobacillus plantarum).